A 195-amino-acid chain; its full sequence is MICGIDEAGRGPVVGPMVIAAVAGDGERLLQLGVRDSKTLSPTKREVIYARIIEVADCVNYVVVEPHIIDEYVRRRMLNSLELDFTARLIELCPAELYYVDSPDVNSRRYGDALSFITGRRVVALHGGESVPQVAAASIVAKVIRDRLIDILKREIGDFGSGYPSDVKTIEWLRLGKIPVECVRRSWRTLRYLNT.

In terms of domain architecture, RNase H type-2 spans 1–195 (MICGIDEAGR…SWRTLRYLNT (195 aa)). 3 residues coordinate a divalent metal cation: Asp-6, Glu-7, and Asp-101.

Belongs to the RNase HII family. The cofactor is Mn(2+). Requires Mg(2+) as cofactor.

The protein localises to the cytoplasm. It carries out the reaction Endonucleolytic cleavage to 5'-phosphomonoester.. Endonuclease that specifically degrades the RNA of RNA-DNA hybrids. The polypeptide is Ribonuclease HII (Pyrobaculum islandicum (strain DSM 4184 / JCM 9189 / GEO3)).